A 105-amino-acid chain; its full sequence is Pyrimidine/purine nucleoside phosphorylase (105 aa).

It belongs to the nucleoside phosphorylase PpnP family.

The enzyme catalyses a purine D-ribonucleoside + phosphate = a purine nucleobase + alpha-D-ribose 1-phosphate. It carries out the reaction adenosine + phosphate = alpha-D-ribose 1-phosphate + adenine. It catalyses the reaction cytidine + phosphate = cytosine + alpha-D-ribose 1-phosphate. The catalysed reaction is guanosine + phosphate = alpha-D-ribose 1-phosphate + guanine. The enzyme catalyses inosine + phosphate = alpha-D-ribose 1-phosphate + hypoxanthine. It carries out the reaction thymidine + phosphate = 2-deoxy-alpha-D-ribose 1-phosphate + thymine. It catalyses the reaction uridine + phosphate = alpha-D-ribose 1-phosphate + uracil. The catalysed reaction is xanthosine + phosphate = alpha-D-ribose 1-phosphate + xanthine. Functionally, catalyzes the phosphorolysis of diverse nucleosides, yielding D-ribose 1-phosphate and the respective free bases. Can use uridine, adenosine, guanosine, cytidine, thymidine, inosine and xanthosine as substrates. Also catalyzes the reverse reactions. The protein is Pyrimidine/purine nucleoside phosphorylase of Albidiferax ferrireducens (strain ATCC BAA-621 / DSM 15236 / T118) (Rhodoferax ferrireducens).